A 229-amino-acid polypeptide reads, in one-letter code: Large ribosomal subunit protein uL1 (229 aa).

Belongs to the universal ribosomal protein uL1 family. In terms of assembly, part of the 50S ribosomal subunit.

Functionally, binds directly to 23S rRNA. The L1 stalk is quite mobile in the ribosome, and is involved in E site tRNA release. Its function is as follows. Protein L1 is also a translational repressor protein, it controls the translation of the L11 operon by binding to its mRNA. In Thermus thermophilus (strain ATCC BAA-163 / DSM 7039 / HB27), this protein is Large ribosomal subunit protein uL1.